A 336-amino-acid chain; its full sequence is Dihydroorotate dehydrogenase (quinone) (336 aa).

FMN is bound by residues 62–66 (AGLDK) and Thr86. Lys66 serves as a coordination point for substrate. 111-115 (NRMGF) contributes to the substrate binding site. Asn139 and Asn172 together coordinate FMN. Asn172 serves as a coordination point for substrate. Residue Ser175 is the Nucleophile of the active site. Asn177 contributes to the substrate binding site. 2 residues coordinate FMN: Lys217 and Thr245. Residue 246–247 (NT) participates in substrate binding. FMN is bound by residues Gly268, Gly297, and 318–319 (YS).

It belongs to the dihydroorotate dehydrogenase family. Type 2 subfamily. As to quaternary structure, monomer. The cofactor is FMN.

It is found in the cell membrane. The catalysed reaction is (S)-dihydroorotate + a quinone = orotate + a quinol. Its pathway is pyrimidine metabolism; UMP biosynthesis via de novo pathway; orotate from (S)-dihydroorotate (quinone route): step 1/1. In terms of biological role, catalyzes the conversion of dihydroorotate to orotate with quinone as electron acceptor. The chain is Dihydroorotate dehydrogenase (quinone) from Aliivibrio fischeri (strain ATCC 700601 / ES114) (Vibrio fischeri).